We begin with the raw amino-acid sequence, 898 residues long: MLSAALLLLPGLPLAGAGATEEPTQESGPLGEPPPGLALFRWQWHEVEAPYLVALWILVASLAKIVFHLSRKVTSLVPESCLLILLGLVLGGIVLAVAKKAEYQLEPGTFFLFLLPPIVLDSGYFMPSRLFFDNLGAILTYAVVGTLWNAFTTGVALWGLQQAGLVAPRVQAGLLDFLLFGSLISAVDPVAVLAVFEEVHVNQTLFIIIFGESLLNDAVTVVLYKVCNSFVEMGSANVQATDYLKGVASLFVVSLGGAAVGLVFAFLLALTTRFTKRVRIIEPLLVFLLAYAAYLTAEMASLSAILAVTMCGLGCKKYVEANISHKSRTAVKYTMKTLASCAETVIFMLLGISAVDSSKWAWDSGLVLGTLFFILFFRALGVVLQTWALNQFRLVPLDKIDQVVMSYGGLRGAVAFALVILLDRTKVPAKDYFVATTIVVVFFTVIVQGLTIKPLVKWLRVKRSDYHKPTLNQELHEHTFDHILAAVEDVVGHHGYHYWRDRWEQFDKKYLSQLLMRRSAYRIRDQIWDVYYRLNIRDAISFVDQGGHVLSSTGLTLPSMPSRNSVAETSVTNLLRESGSGACLDLQVIDTVRSGRDREDAVMHHLLCGGLYKPRRRYKASCGRHFISEDAQERQDKEIFQQNMKRRLESFKSTKHNICFTKSKPRPRKTSHKKKDGVANPEATNGKPPRDLGFQDTAAVILTVESEEEEESDSSETEKEDDEGIIFVARATSEVLQEGKVSGSLEVCPSPRIIPPSPTCAEKELPWKSGQGDLAVYVSSETTKIVPVDMQTGWNQSISSLESLASPPCTQPPTLTRLPPHPLVTEEPQVPIDLSSDPRSSFAFPPSLAKAGRSRSESSADIPQQELQPLMGHKDHTHLSPGTANSHWCIQFNRGGRL.

Residues 1-48 (MLSAALLLLPGLPLAGAGATEEPTQESGPLGEPPPGLALFRWQWHEVE) are Cytoplasmic-facing. A helical membrane pass occupies residues 49-69 (APYLVALWILVASLAKIVFHL). Residues 70–76 (SRKVTSL) are Extracellular-facing. Residues 77–97 (VPESCLLILLGLVLGGIVLAV) traverse the membrane as a helical segment. Over 98 to 106 (AKKAEYQLE) the chain is Cytoplasmic. Residues 107 to 127 (PGTFFLFLLPPIVLDSGYFMP) traverse the membrane as a helical segment. The Extracellular portion of the chain corresponds to 128-137 (SRLFFDNLGA). A helical membrane pass occupies residues 138-158 (ILTYAVVGTLWNAFTTGVALW). At 159 to 176 (GLQQAGLVAPRVQAGLLD) the chain is on the cytoplasmic side. Residues 177-197 (FLLFGSLISAVDPVAVLAVFE) traverse the membrane as a helical segment. Residues 198-203 (EVHVNQ) lie on the Extracellular side of the membrane. The chain crosses the membrane as a helical span at residues 204 to 224 (TLFIIIFGESLLNDAVTVVLY). Over 225–249 (KVCNSFVEMGSANVQATDYLKGVAS) the chain is Cytoplasmic. A helical transmembrane segment spans residues 250 to 270 (LFVVSLGGAAVGLVFAFLLAL). Topologically, residues 271–279 (TTRFTKRVR) are extracellular. A helical membrane pass occupies residues 280–300 (IIEPLLVFLLAYAAYLTAEMA). The Cytoplasmic segment spans residues 301-334 (SLSAILAVTMCGLGCKKYVEANISHKSRTAVKYT). A helical membrane pass occupies residues 335–355 (MKTLASCAETVIFMLLGISAV). Topologically, residues 356–363 (DSSKWAWD) are extracellular. Residues 364 to 384 (SGLVLGTLFFILFFRALGVVL) traverse the membrane as a helical segment. Residues 385–401 (QTWALNQFRLVPLDKID) are Cytoplasmic-facing. A helical transmembrane segment spans residues 402 to 422 (QVVMSYGGLRGAVAFALVILL). Over 423–431 (DRTKVPAKD) the chain is Extracellular. The helical transmembrane segment at 432-452 (YFVATTIVVVFFTVIVQGLTI) threads the bilayer. Over 453 to 898 (KPLVKWLRVK…CIQFNRGGRL (446 aa)) the chain is Cytoplasmic. Disordered stretches follow at residues 660–693 (FTKSKPRPRKTSHKKKDGVANPEATNGKPPRDLG) and 826–866 (EEPQ…PQQE). Over residues 663 to 675 (SKPRPRKTSHKKK) the composition is skewed to basic residues. Residues 857–866 (ESSADIPQQE) are compositionally biased toward polar residues.

The protein belongs to the monovalent cation:proton antiporter 1 (CPA1) transporter (TC 2.A.36) family. Interacts with CHP1 and CHP2. Interacts with ARRB2; facilitates the endocytosis of SLC9A5 from the plasma membrane. Interacts with RACK1; this interaction positively regulates SLC9A5 activity and promote SLC9A5 localization to focal adhesions. Interacts with SCAMP2; this interaction regulates SLC9A5 cell-surface targeting and SLC9A5 activity. Post-translationally, phosphorylated by PRKAA2; promotes its accumulation at the cell surface. Phosphorylated by CSNK2A1 in a manner favoring its beta-arrestin binding and endocytosis. In terms of tissue distribution, highest expression level is detected in brain. Expressed in hippocampal neurons (at protein level).

The protein resides in the cell membrane. It localises to the recycling endosome membrane. The protein localises to the cell projection. Its subcellular location is the dendritic spine membrane. It is found in the synaptic cell membrane. The protein resides in the cell junction. It localises to the focal adhesion. It carries out the reaction Na(+)(in) + H(+)(out) = Na(+)(out) + H(+)(in). Plasma membrane Na(+)/H(+) antiporter. Mediates the electroneutral exchange of intracellular H(+) ions for extracellular Na(+) in 1:1 stoichiometry. Responsible for regulating intracellular pH homeostasis, in particular in neural tissues. Acts as a negative regulator of dendritic spine growth. Plays a role in postsynaptic remodeling and signaling. Can also contribute to organellar pH regulation, with consequences for receptor tyrosine kinase trafficking. The polypeptide is Sodium/hydrogen exchanger 5 (Slc9a5) (Mus musculus (Mouse)).